The sequence spans 335 residues: Rho guanine nucleotide exchange factor 39 (335 aa).

Residues 22–197 form the DH domain; it reads KRACTARELL…SETAQRVHTI (176 aa). The region spanning 227–331 is the PH domain; the sequence is WFLRQGWLLV…WYHSLTWAIS (105 aa).

As to expression, strongly expressed in hepatocellular carcinoma (HCC) compared with their non-cancerous counterparts.

It localises to the cell membrane. Promotes cell proliferation. In Homo sapiens (Human), this protein is Rho guanine nucleotide exchange factor 39 (ARHGEF39).